Reading from the N-terminus, the 367-residue chain is Glutamate 5-kinase (367 aa).

Lys-10 is a binding site for ATP. Substrate is bound by residues Ser-50, Asp-137, and Asn-149. ATP-binding positions include 169 to 170 (TD) and 211 to 217 (TGGMSTK). A PUA domain is found at 275–353 (AGEITVDEGA…QEIDAILGYE (79 aa)).

Belongs to the glutamate 5-kinase family.

The protein localises to the cytoplasm. The catalysed reaction is L-glutamate + ATP = L-glutamyl 5-phosphate + ADP. It functions in the pathway amino-acid biosynthesis; L-proline biosynthesis; L-glutamate 5-semialdehyde from L-glutamate: step 1/2. Its function is as follows. Catalyzes the transfer of a phosphate group to glutamate to form L-glutamate 5-phosphate. The sequence is that of Glutamate 5-kinase from Shigella flexneri.